The sequence spans 474 residues: MTTPVVTRFAPSPTGFLHIGGGRTALFNWLYARKHGGRMLLRIEDTDRARSTPEAIDAILDGLKWLGIEWDDDVVYQFSRVARHREIAEQLLAEGKAYRCYATTEELSEMREKARAEGRAKLYDGRWRDRDASEAPQGVKPTIRLKAPLTGETVIEDQVQGRIVWQNENLDDLVLLRGDGTPTYMLAVVVDDHDMGVTHIIRGDDHLINAARQKQIYDTLGWALPTMAHIPLIHGPDGSKLSKRHGALGVDAYRAMGYLPAALRNYLVRLGWSHGDQEIFSTQEMIDAFDLPAIGRSAARFDFAKLENLNGHYIRHCDDAALMTLFENALDFVPGGADLKPKLNDVTRAQLLRAMPGLKERAKTLIELIEGARFIFADRPLPIEAKAAALLTPETRALIDRLRAALESVTSWNAETTEAAMRTFAEQNNLKLGAIAQPLRIALTGRTTSPGIFDVLAALGKETCLARLGDQGSR.

The short motif at 11 to 21 is the 'HIGH' region element; the sequence is PSPTGFLHIGG. Positions 240–244 match the 'KMSKS' region motif; sequence KLSKR. An ATP-binding site is contributed by lysine 243.

This sequence belongs to the class-I aminoacyl-tRNA synthetase family. Glutamate--tRNA ligase type 1 subfamily. Monomer.

The protein localises to the cytoplasm. It carries out the reaction tRNA(Glu) + L-glutamate + ATP = L-glutamyl-tRNA(Glu) + AMP + diphosphate. Functionally, catalyzes the attachment of glutamate to tRNA(Glu) in a two-step reaction: glutamate is first activated by ATP to form Glu-AMP and then transferred to the acceptor end of tRNA(Glu). The chain is Glutamate--tRNA ligase from Nitrobacter winogradskyi (strain ATCC 25391 / DSM 10237 / CIP 104748 / NCIMB 11846 / Nb-255).